Here is a 212-residue protein sequence, read N- to C-terminus: Leucyl/phenylalanyl-tRNA--protein transferase (212 aa).

This sequence belongs to the L/F-transferase family.

The protein resides in the cytoplasm. It carries out the reaction N-terminal L-lysyl-[protein] + L-leucyl-tRNA(Leu) = N-terminal L-leucyl-L-lysyl-[protein] + tRNA(Leu) + H(+). It catalyses the reaction N-terminal L-arginyl-[protein] + L-leucyl-tRNA(Leu) = N-terminal L-leucyl-L-arginyl-[protein] + tRNA(Leu) + H(+). The enzyme catalyses L-phenylalanyl-tRNA(Phe) + an N-terminal L-alpha-aminoacyl-[protein] = an N-terminal L-phenylalanyl-L-alpha-aminoacyl-[protein] + tRNA(Phe). Functionally, functions in the N-end rule pathway of protein degradation where it conjugates Leu, Phe and, less efficiently, Met from aminoacyl-tRNAs to the N-termini of proteins containing an N-terminal arginine or lysine. This is Leucyl/phenylalanyl-tRNA--protein transferase from Christiangramia forsetii (strain DSM 17595 / CGMCC 1.15422 / KT0803) (Gramella forsetii).